The primary structure comprises 890 residues: Alanine--tRNA ligase (890 aa).

Zn(2+)-binding residues include histidine 578, histidine 582, cysteine 689, and histidine 693.

The protein belongs to the class-II aminoacyl-tRNA synthetase family. Zn(2+) serves as cofactor.

It localises to the cytoplasm. The enzyme catalyses tRNA(Ala) + L-alanine + ATP = L-alanyl-tRNA(Ala) + AMP + diphosphate. Its function is as follows. Catalyzes the attachment of alanine to tRNA(Ala) in a two-step reaction: alanine is first activated by ATP to form Ala-AMP and then transferred to the acceptor end of tRNA(Ala). Also edits incorrectly charged Ser-tRNA(Ala) and Gly-tRNA(Ala) via its editing domain. This is Alanine--tRNA ligase from Deinococcus radiodurans (strain ATCC 13939 / DSM 20539 / JCM 16871 / CCUG 27074 / LMG 4051 / NBRC 15346 / NCIMB 9279 / VKM B-1422 / R1).